A 286-amino-acid polypeptide reads, in one-letter code: UPF0725 protein At2g20620 (286 aa).

The segment at 1–49 (MVLETPVCSPIDKESSSDDVQLNKPPKKKRKLDVVYPPRDNTSSSSDVK) is disordered.

This sequence belongs to the UPF0725 (EMB2204) family.

In Arabidopsis thaliana (Mouse-ear cress), this protein is UPF0725 protein At2g20620.